Reading from the N-terminus, the 83-residue chain is Small ribosomal subunit protein bS18 (83 aa).

It belongs to the bacterial ribosomal protein bS18 family. Part of the 30S ribosomal subunit. Forms a tight heterodimer with protein bS6.

Its function is as follows. Binds as a heterodimer with protein bS6 to the central domain of the 16S rRNA, where it helps stabilize the platform of the 30S subunit. This Methylobacterium radiotolerans (strain ATCC 27329 / DSM 1819 / JCM 2831 / NBRC 15690 / NCIMB 10815 / 0-1) protein is Small ribosomal subunit protein bS18.